Consider the following 156-residue polypeptide: Small ribosomal subunit protein uS7 (156 aa).

Belongs to the universal ribosomal protein uS7 family. Part of the 30S ribosomal subunit. Contacts proteins S9 and S11.

Its function is as follows. One of the primary rRNA binding proteins, it binds directly to 16S rRNA where it nucleates assembly of the head domain of the 30S subunit. Is located at the subunit interface close to the decoding center, probably blocks exit of the E-site tRNA. This chain is Small ribosomal subunit protein uS7, found in Bacillus cereus (strain G9842).